The following is a 205-amino-acid chain: Probable 3'-5' exonuclease KapD (205 aa).

An Exonuclease domain is found at 6 to 173 (LLIIDFEFTM…DDALTAYKLF (168 aa)). Residues Asp-10, Glu-12, and Asp-104 each coordinate Mg(2+). The Proton acceptor role is filled by Glu-12. Glu-12 serves as a coordination point for AMP. His-160 (proton acceptor) is an active-site residue. His-160 is an AMP binding site. Asp-165 is a binding site for Mg(2+).

Requires Mg(2+) as cofactor.

Functionally, specifically inhibits the KinA pathway to sporulation. The polypeptide is Probable 3'-5' exonuclease KapD (kapD) (Bacillus subtilis (strain 168)).